The following is a 314-amino-acid chain: Aspartate carbamoyltransferase catalytic subunit (314 aa).

Carbamoyl phosphate-binding residues include Arg63 and Thr64. Lys91 serves as a coordination point for L-aspartate. Residues Arg113, His143, and Gln146 each coordinate carbamoyl phosphate. Positions 176 and 228 each coordinate L-aspartate. Carbamoyl phosphate is bound by residues Ala269 and Pro270.

This sequence belongs to the aspartate/ornithine carbamoyltransferase superfamily. ATCase family. In terms of assembly, heterododecamer (2C3:3R2) of six catalytic PyrB chains organized as two trimers (C3), and six regulatory PyrI chains organized as three dimers (R2).

The catalysed reaction is carbamoyl phosphate + L-aspartate = N-carbamoyl-L-aspartate + phosphate + H(+). It functions in the pathway pyrimidine metabolism; UMP biosynthesis via de novo pathway; (S)-dihydroorotate from bicarbonate: step 2/3. Catalyzes the condensation of carbamoyl phosphate and aspartate to form carbamoyl aspartate and inorganic phosphate, the committed step in the de novo pyrimidine nucleotide biosynthesis pathway. This Cutibacterium acnes (strain DSM 16379 / KPA171202) (Propionibacterium acnes) protein is Aspartate carbamoyltransferase catalytic subunit.